The following is a 283-amino-acid chain: Acetylglutamate kinase (283 aa).

Residues 64-65, Arg86, and Asn179 contribute to the substrate site; that span reads GG.

Belongs to the acetylglutamate kinase family. ArgB subfamily.

Its subcellular location is the cytoplasm. It carries out the reaction N-acetyl-L-glutamate + ATP = N-acetyl-L-glutamyl 5-phosphate + ADP. Its pathway is amino-acid biosynthesis; L-arginine biosynthesis; N(2)-acetyl-L-ornithine from L-glutamate: step 2/4. Its function is as follows. Catalyzes the ATP-dependent phosphorylation of N-acetyl-L-glutamate. In Campylobacter hominis (strain ATCC BAA-381 / DSM 21671 / CCUG 45161 / LMG 19568 / NCTC 13146 / CH001A), this protein is Acetylglutamate kinase.